Reading from the N-terminus, the 36-residue chain is Photosystem I reaction center subunit VIII (36 aa).

A helical transmembrane segment spans residues 10 to 30 (FVPLVGLVFSAIIMVLSFLYI).

Belongs to the PsaI family.

The protein resides in the plastid. Its subcellular location is the chloroplast thylakoid membrane. Its function is as follows. May help in the organization of the PsaL subunit. This Welwitschia mirabilis (Tree tumbo) protein is Photosystem I reaction center subunit VIII.